We begin with the raw amino-acid sequence, 992 residues long: GATOR2 complex protein WDR59 (992 aa).

7 WD repeats span residues 57 to 98 (QSKW…GEVG), 103 to 143 (GHTR…KPTV), 146 to 185 (SAVA…TAVE), 189 to 229 (AHLS…KYLN), 232 to 276 (PCQV…APVH), 278 to 318 (FVGH…RVDY), and 319 to 362 (QMQR…SLSH). A disordered region spans residues 343 to 373 (PEPEKTPHPQDIDHQPSLSHGEEDAIKEDPP). Positions 344 to 373 (EPEKTPHPQDIDHQPSLSHGEEDAIKEDPP) are enriched in basic and acidic residues. In terms of domain architecture, RWD spans 393–494 (QEFSLINVQI…RQLVSCLESF (102 aa)). S564 carries the post-translational modification Phosphoserine. A WD 8 repeat occupies 660-706 (KSLGELYILNVNDTQETCQKNATSAMLVGRKDLVQVWSLATVATDLC). Phosphoserine occurs at positions 839, 840, and 848. The segment at 849–870 (LTYSDPRERERDQHDKNKRLLD) is disordered. Positions 853–869 (DPRERERDQHDKNKRLL) are enriched in basic and acidic residues. A C4-type zinc finger spans residues 919 to 939 (YCSHCRSEVRGTQCAICKGFT). 13 residues coordinate Zn(2+): C920, C923, C932, C935, C945, C956, H961, H964, H967, C978, C982, C984, and C986. The RING-type; atypical zinc finger occupies 940-989 (FQCAICHVAVRGSSNFCLTCGHGGHTSHMMEWFRTQEVCPTGCGCHCLLE).

This sequence belongs to the WD repeat WDR59 family. Component of the GATOR2 subcomplex, composed of MIOS, SEC13, SEH1L, WDR24 and WDR59. The GATOR2 complex interacts with CASTOR1 and CASTOR2; the interaction is negatively regulated by arginine. The GATOR2 complex interacts with SESN1, SESN2 and SESN3; the interaction is negatively regulated by amino acids. Interacts with DDB1-CUL4A/B E3 ligase complexes.

Its subcellular location is the lysosome membrane. With respect to regulation, the GATOR2 complex is negatively regulated by the upstream amino acid sensors CASTOR1 and SESN2, which sequester the GATOR2 complex in absence of amino acids. In the presence of abundant amino acids, GATOR2 is released from CASTOR1 and SESN2 and activated. Its function is as follows. As a component of the GATOR2 complex, functions as an activator of the amino acid-sensing branch of the mTORC1 signaling pathway. The GATOR2 complex indirectly activates mTORC1 through the inhibition of the GATOR1 subcomplex. GATOR2 probably acts as an E3 ubiquitin-protein ligase toward GATOR1. In the presence of abundant amino acids, the GATOR2 complex mediates ubiquitination of the NPRL2 core component of the GATOR1 complex, leading to GATOR1 inactivation. In the absence of amino acids, GATOR2 is inhibited, activating the GATOR1 complex. In Mus musculus (Mouse), this protein is GATOR2 complex protein WDR59.